The following is a 165-amino-acid chain: Chorismate pyruvate-lyase (165 aa).

Substrate is bound by residues M35, R77, L115, and E156.

This sequence belongs to the UbiC family. In terms of assembly, monomer.

The protein localises to the cytoplasm. The enzyme catalyses chorismate = 4-hydroxybenzoate + pyruvate. The protein operates within cofactor biosynthesis; ubiquinone biosynthesis. Functionally, removes the pyruvyl group from chorismate, with concomitant aromatization of the ring, to provide 4-hydroxybenzoate (4HB) for the ubiquinone pathway. The polypeptide is Chorismate pyruvate-lyase (Salmonella arizonae (strain ATCC BAA-731 / CDC346-86 / RSK2980)).